Reading from the N-terminus, the 2437-residue chain is Neurogenic locus notch homolog protein 1 (2437 aa).

The N-terminal stretch at 1 to 20 (MNRFLVKLTLLTAASLATVA) is a signal peptide. EGF-like domains lie at 21-57 (QGQR…AQCQ), 58-98 (FPNP…RLCL), 101-138 (VNHA…KTCQ), and 139-175 (LADP…QTCR). At 21–1726 (QGQRCSEYCQ…GGPPKTGEMY (1706 aa)) the chain is on the extracellular side. 111 cysteine pairs are disulfide-bonded: Cys-25/Cys-35, Cys-29/Cys-45, Cys-47/Cys-56, Cys-62/Cys-73, Cys-67/Cys-86, Cys-88/Cys-97, Cys-105/Cys-116, Cys-110/Cys-126, Cys-128/Cys-137, Cys-143/Cys-154, Cys-148/Cys-163, Cys-165/Cys-174, Cys-181/Cys-194, Cys-188/Cys-203, Cys-205/Cys-214, Cys-221/Cys-232, Cys-226/Cys-242, Cys-244/Cys-253, Cys-260/Cys-271, Cys-265/Cys-280, Cys-282/Cys-291, Cys-298/Cys-311, Cys-305/Cys-320, Cys-322/Cys-331, Cys-338/Cys-349, Cys-343/Cys-358, Cys-360/Cys-369, Cys-375/Cys-386, Cys-380/Cys-397, Cys-399/Cys-408, Cys-415/Cys-428, Cys-422/Cys-437, Cys-439/Cys-448, Cys-455/Cys-466, Cys-460/Cys-475, Cys-477/Cys-486, Cys-493/Cys-503, Cys-498/Cys-512, Cys-514/Cys-523, Cys-530/Cys-541, Cys-535/Cys-550, Cys-552/Cys-561, Cys-568/Cys-578, Cys-573/Cys-587, Cys-589/Cys-598, Cys-605/Cys-616, Cys-610/Cys-625, Cys-627/Cys-636, Cys-643/Cys-653, Cys-648/Cys-662, Cys-664/Cys-673, Cys-680/Cys-691, Cys-685/Cys-700, Cys-702/Cys-711, Cys-718/Cys-728, Cys-723/Cys-737, Cys-739/Cys-748, Cys-755/Cys-766, Cys-760/Cys-775, Cys-777/Cys-786, Cys-793/Cys-804, Cys-798/Cys-813, Cys-815/Cys-824, Cys-831/Cys-842, Cys-836/Cys-853, Cys-855/Cys-864, Cys-871/Cys-882, Cys-876/Cys-891, Cys-893/Cys-902, Cys-909/Cys-920, Cys-914/Cys-929, Cys-931/Cys-940, Cys-947/Cys-958, Cys-952/Cys-967, Cys-969/Cys-978, Cys-985/Cys-996, Cys-990/Cys-1005, Cys-1007/Cys-1016, Cys-1023/Cys-1034, Cys-1028/Cys-1043, Cys-1045/Cys-1054, Cys-1061/Cys-1072, Cys-1066/Cys-1081, Cys-1083/Cys-1092, Cys-1099/Cys-1120, Cys-1114/Cys-1129, Cys-1131/Cys-1140, Cys-1147/Cys-1158, Cys-1152/Cys-1167, Cys-1169/Cys-1178, Cys-1185/Cys-1196, Cys-1190/Cys-1205, Cys-1207/Cys-1216, Cys-1223/Cys-1242, Cys-1236/Cys-1251, Cys-1253/Cys-1262, Cys-1269/Cys-1282, Cys-1274/Cys-1291, Cys-1293/Cys-1302, Cys-1309/Cys-1320, Cys-1314/Cys-1332, Cys-1334/Cys-1343, Cys-1350/Cys-1361, Cys-1355/Cys-1370, Cys-1372/Cys-1381, Cys-1389/Cys-1400, Cys-1394/Cys-1411, Cys-1413/Cys-1422, Cys-1447/Cys-1470, Cys-1452/Cys-1465, and Cys-1461/Cys-1477. Residues 177–215 (DVNECAVSPSPCRNGGTCINEVGSYLCRCPPEYTGPHCQ) form the EGF-like 5; calcium-binding domain. An EGF-like 6 domain is found at 217 to 254 (LYQPCLPSPCRSGGTCVQTSDTTHTCSCLPGFTGQTCE). A glycan (O-linked (Fuc...) threonine; alternate) is linked at Thr-231. Thr-231 carries O-linked (GalNAc...) threonine; alternate glycosylation. An EGF-like 7; calcium-binding domain is found at 256 to 292 (NVDDCTQHACENGGPCIDGINTYNCHCDKHWTGQYCT). An EGF-like 8; calcium-binding domain is found at 294-332 (DVDECELSPNACQNGGTCHNTIGGFHCVCVNGWTGDDCS). Residues 334–370 (NIDDCASAACSHGATCHDRVASFFCECPHGRTGLLCH) enclose the EGF-like 9; calcium-binding domain. The EGF-like 10 domain occupies 371–409 (LDDACISNPCQKGSNCDTNPVSGKAICTCPPGYTGSACN). Residues 411-449 (DIDECSLGANPCEHGGRCLNTKGSFQCKCLQGYEGPRCE) enclose the EGF-like 11; calcium-binding domain. Residues 451-487 (DVNECKSNPCQNDATCLDQIGGFHCICMPGYEGVFCQ) form the EGF-like 12; calcium-binding domain. An EGF-like 13; calcium-binding domain is found at 489 to 524 (NSDDCASQPCLNGKCIDKINSFHCECPKGFSGSLCQ). Residues 526–562 (DVDECASTPCKNGAKCTDGPNKYTCECTPGFSGIHCE) enclose the EGF-like 14; calcium-binding domain. In terms of domain architecture, EGF-like 15; calcium-binding spans 564-599 (DINECASSPCHYGVCRDGVASFTCDCRPGYTGRLCE). Positions 601 to 637 (NINECLSQPCRNGGTCQDRENAYICTCPKGTTGVNCE) constitute an EGF-like 16; calcium-binding domain. The region spanning 639 to 674 (NIDDCKRKPCDYGKCIDKINGYECVCEPGYSGSMCN) is the EGF-like 17; calcium-binding domain. In terms of domain architecture, EGF-like 18; calcium-binding spans 676-712 (NIDDCALNPCHNGGTCIDGVNSFTCLCPDGFRDATCL). Residues 714-749 (QHNECSSNPCIHGSCLDQINSYRCVCEAGWMGRNCD) form the EGF-like 19; calcium-binding domain. The region spanning 751 to 787 (NINECLSNPCVNGGTCKDMTSGYLCTCRAGFSGPNCQ) is the EGF-like 20; calcium-binding domain. In terms of domain architecture, EGF-like 21; calcium-binding spans 789 to 825 (NINECASNPCLNQGSCIDDVAGFKCNCMLPYTGEVCE). Residues 827–865 (VLAPCSPRPCKNGGVCRESEDFQSFSCNCPAGWQGQTCE) enclose the EGF-like 22 domain. An EGF-like 23; calcium-binding domain is found at 867-903 (DINECVRNPCTNGGVCENLRGGFQCRCNPGFTGALCE). The 37-residue stretch at 905 to 941 (DIDDCEPNPCSNGGVCQDRVNGFVCVCLAGFRGERCA) folds into the EGF-like 24; calcium-binding domain. Residues 943–979 (DIDECVSAPCRNGGNCTDCVNSYTCSCPAGFSGINCE) form the EGF-like 25; calcium-binding domain. Asn-957 carries an N-linked (GlcNAc...) asparagine glycan. The 37-residue stretch at 981–1017 (NTPDCTESSCFNGGTCVDGISSFSCVCLPGFTGNYCQ) folds into the EGF-like 26 domain. The EGF-like 27; calcium-binding domain maps to 1019–1055 (DVNECDSRPCQNGGSCQDGYGTYKCTCPHGYTGLNCQ). EGF-like domains follow at residues 1057–1093 (LVRW…IYCD) and 1095–1141 (PSVS…SYCQ). Positions 1143–1179 (QVDECQPNPCQNGATCTDYLGGYSCECVPGYHGMNCS) constitute an EGF-like 30; calcium-binding domain. A glycan (N-linked (GlcNAc...) asparagine) is linked at Asn-1177. The EGF-like 31; calcium-binding domain maps to 1181-1217 (EINECLSQPCQNGGTCIDLVNTYKCSCPRGTQGVHCE). The region spanning 1219 to 1263 (DIDDCSPSVDPLTGEPRCFNGGRCVDRVGGYGCVCPAGFVGERCE) is the EGF-like 32; calcium-binding domain. 4 consecutive EGF-like domains span residues 1265-1303 (DVNE…KRCE), 1305-1344 (VFNG…SSCE), 1346-1382 (DSQS…HECQ), and 1385-1423 (MDSP…LLCH). Residue Thr-1399 is glycosylated (O-linked (Fuc...) threonine; alternate). O-linked (GalNAc...) threonine; alternate glycosylation is present at Thr-1399. LNR repeat units follow at residues 1447 to 1487 (CEIA…PWQN), 1488 to 1525 (CSAA…LEGQ), and 1526 to 1566 (CNPL…VPQK). Asn-1487 is a glycosylation site (N-linked (GlcNAc...) asparagine). Intrachain disulfides connect Cys-1488/Cys-1512, Cys-1494/Cys-1507, Cys-1503/Cys-1519, Cys-1526/Cys-1552, Cys-1534/Cys-1547, and Cys-1543/Cys-1559. Residue Asn-1585 is glycosylated (N-linked (GlcNAc...) asparagine). Residues 1727–1747 (PMFLVLLALAVLALAAVGVVV) traverse the membrane as a helical segment. Topologically, residues 1748–2437 (SRKRKREHGQ…QMNHIPEAFK (690 aa)) are cytoplasmic. Residues 1770–1790 (KKKRREPVGEDSVGLKPLKNS) are disordered. ANK repeat units lie at residues 1867–1910 (DGFT…NLHN), 1915–1944 (TGET…DANV), 1948–1978 (MGRT…DLDA), 1982–2011 (DGTT…DPNA), 2015–2044 (SGKS…NKDL), and 2048–2077 (KEET…NRDI). 2 disordered regions span residues 2127-2174 (IKPS…GGIM) and 2356-2437 (RMAP…EAFK). Residues 2356 to 2387 (RMAPPISSTQFLTPPSQHSYSNPMDNTPNHQQ) are compositionally biased toward polar residues. Positions 2396–2411 (PSAGSPDQWSSSSPHS) are enriched in low complexity. Over residues 2412-2429 (NLSDWSEGISSPPTSMQM) the composition is skewed to polar residues.

It belongs to the NOTCH family. In terms of processing, synthesized in the endoplasmic reticulum as an inactive form which is proteolytically cleaved by a furin-like convertase in the trans-Golgi network before it reaches the plasma membrane to yield an active, ligand-accessible form. Cleavage results in a C-terminal fragment N(TM) and a N-terminal fragment N(EC). Following ligand binding, it is cleaved by adam17 to yield a membrane-associated intermediate fragment called notch extracellular truncation (NEXT). Following endocytosis, this fragment is then cleaved by presenilin dependent gamma-secretase to release a Notch-derived peptide containing the intracellular domain (NICD) from the membrane. O-glycosylated on the EGF-like domains. Contains both O-linked fucose and O-linked glucose. O-linked glycosylation by galnt11 is involved in determination of left/right symmetry: glycosylation promotes activation of notch1, possibly by promoting cleavage by adam17, modulating the balance between motile and immotile (sensory) cilia at the left-right organiser (LRO).

Its subcellular location is the cell membrane. It is found in the nucleus. Its function is as follows. Functions as a receptor for membrane-bound ligands Jagged-1 (JAG1), Jagged-2 (JAG2) and Delta-1 (DLL1) to regulate cell-fate determination. Upon ligand activation through the released notch intracellular domain (NICD) it forms a transcriptional activator complex with RBPJ/RBPSUH and activates genes of the enhancer of split locus. Affects the implementation of differentiation, proliferation and apoptotic programs. Involved in angiogenesis; negatively regulates endothelial cell proliferation and migration and angiogenic sprouting. Involved in the maturation of both CD4(+) and CD8(+) cells in the thymus. Important for follicular differentiation and possibly cell fate selection within the follicle. During cerebellar development, functions as a receptor for neuronal DNER and is involved in the differentiation of Bergmann glia. Represses neuronal and myogenic differentiation. May play an essential role in postimplantation development, probably in some aspect of cell specification and/or differentiation. May be involved in mesoderm development, somite formation and neurogenesis. Involved in determination of left/right symmetry by modulating the balance between motile and immotile (sensory) cilia at the left-right organiser (LRO). The chain is Neurogenic locus notch homolog protein 1 (notch1a) from Danio rerio (Zebrafish).